Consider the following 293-residue polypeptide: RNA-binding Raly-like protein (293 aa).

In terms of domain architecture, RRM spans 21-92 (SRVFIGNLNT…QPLDINMAGE (72 aa)). Disordered regions lie at residues 159–195 (PRAA…KLKS) and 245–293 (QDEC…LQIK). Low complexity predominate over residues 176–192 (KGGSRSAVSGSSSSGSK). The stretch at 192–254 (KLKSDELQTI…QDECVSENAD (63 aa)) forms a coiled coil. Acidic residues predominate over residues 259–284 (EPAEGAPDADGEELTDGVEEDFDEDG).

It belongs to the RRM HNRPC family. RALY subfamily.

This is RNA-binding Raly-like protein (RALYL) from Bos taurus (Bovine).